Consider the following 585-residue polypeptide: Proline-rich protein 14 (585 aa).

N-acetylmethionine is present on methionine 1. Positions 1–135 (MDLPGDSSPP…TLRRRSRTTP (135 aa)) are sufficient for heterochromatin association in interphase and chromatin association in anaphase. 3 disordered regions span residues 23–46 (ALWGARSPKRPRLQLPGAPSPLEK), 73–150 (TSIP…RAPQ), and 189–241 (IVRQ…RPRL). The tract at residues 85-378 (PVHRQPPASP…MARAPPPPRP (294 aa)) is required for the interaction with GRB2 and sufficient to promote the phosphorylation of AKT and cell proliferation. A compositionally biased stretch (basic residues) spans 119-132 (RIHRTSSTLRRRSR). Positions 136–365 (GPEEGPSQKV…RPRPRRHTVG (230 aa)) are required for nuclear lamina association. Positions 193–205 (PTPPPGDLEPPFQ) are enriched in pro residues. A Phosphoserine modification is found at serine 277. Disordered stretches follow at residues 290-445 (EAEQ…KVSR) and 525-557 (DSSLPRSRRPSRGVRAAGGRTVPPNVAPSPDVG). Over residues 337-356 (LGPPGPGTCTWPPAPPQPSR) the composition is skewed to pro residues. A compositionally biased stretch (low complexity) spans 393-409 (SPSLTTSCSSTASTSFS). Residues 518–535 (RRAVEFRDSSLPRSRRPS) are required for nuclear localization.

As to quaternary structure, interacts (via proline-rich region) with GRB2 (via SH3 domain 2). Interacts (via N-terminus) with CBX5.

Its subcellular location is the chromosome. It is found in the nucleus. The protein resides in the nucleus lamina. The protein localises to the nucleoplasm. In terms of biological role, functions in tethering peripheral heterochromatin to the nuclear lamina during interphase, possibly through the interaction with heterochromatin protein CBX5/HP1 alpha. Might play a role in reattaching heterochromatin to the nuclear lamina at mitotic exit. Promotes myoblast differentiation during skeletal myogenesis, possibly by stimulating transcription factor MyoD activity via binding to CBX5/HP1 alpha. Involved in the positive regulation of the PI3K-Akt-mTOR signaling pathway and in promoting cell proliferation, possibly via binding to GRB2. This is Proline-rich protein 14 (PRR14) from Homo sapiens (Human).